We begin with the raw amino-acid sequence, 177 residues long: dCTP deaminase, dUMP-forming (177 aa).

DCTP contacts are provided by residues 98 to 103, Asn-110, 115 to 118, 123 to 125, Gln-144, 157 to 160, and Gln-164; these read RSSVGR, DPGF, TLE, and YQGK. Catalysis depends on Glu-125, which acts as the Proton donor/acceptor.

The protein belongs to the dCTP deaminase family. Homotrimer. It depends on Mg(2+) as a cofactor.

It catalyses the reaction dCTP + 2 H2O = dUMP + NH4(+) + diphosphate. The protein operates within pyrimidine metabolism; dUMP biosynthesis; dUMP from dCTP: step 1/1. With respect to regulation, inhibited by dTTP. Bifunctional enzyme that catalyzes both the deamination of dCTP to dUTP and the hydrolysis of dUTP to dUMP without releasing the toxic dUTP intermediate. In Halalkalibacterium halodurans (strain ATCC BAA-125 / DSM 18197 / FERM 7344 / JCM 9153 / C-125) (Bacillus halodurans), this protein is dCTP deaminase, dUMP-forming.